We begin with the raw amino-acid sequence, 624 residues long: Sodium/potassium/calcium exchanger 3 (624 aa).

The signal sequence occupies residues 1–25 (RDLLLSQLCFLASVALLLWSLSSLR). Residues 26–88 (EQKELDLMDL…DIFSNEDRRQ (63 aa)) are Extracellular-facing. N-linked (GlcNAc...) asparagine glycosylation is found at asparagine 52 and asparagine 67. A helical membrane pass occupies residues 89-109 (GAVVLHVLCAMYMFYALAIVC). At 110–133 (DDFFVPSLEKICERLHLSEDVAGA) the chain is on the cytoplasmic side. The stretch at 130-170 (VAGATFMAAGSSAPELFTSVIGVFITKGDVGVGTIVGSAVF) is one Alpha-1 repeat. The helical transmembrane segment at 134–154 (TFMAAGSSAPELFTSVIGVFI) threads the bilayer. At 155–163 (TKGDVGVGT) the chain is on the extracellular side. Residues 164 to 184 (IVGSAVFNILCIIGVCGLFAG) traverse the membrane as a helical segment. Residues 185–191 (QVVALSS) lie on the Cytoplasmic side of the membrane. A helical membrane pass occupies residues 192–212 (WCLLRDSIYYTLSVVALIVFI). Residues 213 to 215 (YDE) are Extracellular-facing. A helical membrane pass occupies residues 216–236 (KVSWWESLVLVLMYLIYIIIM). The Cytoplasmic segment spans residues 237–465 (KYNACIHQCF…WFMVTFASST (229 aa)). Serine 289 is subject to Phosphoserine. Acidic residues predominate over residues 386-414 (AEADNETENENEDENNENDEEEDEDDDEG). The segment at 386-421 (AEADNETENENEDENNENDEEEDEDDDEGPYTPFDP) is disordered. The chain crosses the membrane as a helical span at residues 466–486 (LWIAAFSYMMVWMVTIIGYTL). The Extracellular segment spans residues 487–491 (GIPDV). Residues 492–512 (IMGITFLAAGTSVPDCMASLI) traverse the membrane as a helical segment. The Alpha-2 repeat unit spans residues 499–530 (AAGTSVPDCMASLIVARQGMGDMAVSNSIGSN). Residues 513–530 (VARQGMGDMAVSNSIGSN) lie on the Cytoplasmic side of the membrane. The helical transmembrane segment at 531-551 (VFDILIGLGLPWALQTLAVDY) threads the bilayer. Over 552 to 561 (GSYIRLNSRG) the chain is Extracellular. The helical transmembrane segment at 562-582 (LIYSVGLLLASVFVTVFGVHL) threads the bilayer. At 583-596 (NKWQLDKKLGCGCL) the chain is on the cytoplasmic side. The chain crosses the membrane as a helical span at residues 597–617 (FLYGVFLCFSIMTEFNVFTFV). The Extracellular segment spans residues 618–624 (NLPMCGD).

This sequence belongs to the Ca(2+):cation antiporter (CaCA) (TC 2.A.19) family. SLC24A subfamily. As to expression, abundant in the brain. Expressed at low levels in the aorta, uterus and intestine.

Its subcellular location is the cell membrane. It catalyses the reaction Ca(2+)(out) + K(+)(out) + 4 Na(+)(in) = Ca(2+)(in) + K(+)(in) + 4 Na(+)(out). In terms of biological role, calcium, potassium:sodium antiporter that transports 1 Ca(2+) and 1 K(+) in exchange for 4 Na(+). The polypeptide is Sodium/potassium/calcium exchanger 3 (Slc24a3) (Rattus norvegicus (Rat)).